We begin with the raw amino-acid sequence, 338 residues long: Heme A synthase (338 aa).

A run of 5 helical transmembrane segments spans residues 6–26 (ITKW…IGGI), 93–113 (GRIT…KGII), 118–138 (IAPY…GWYM), 154–174 (LAFH…QLIK), and 201–221 (VIYL…GLIY). Residue His-256 participates in heme binding. The next 3 helical transmembrane spans lie at 258–278 (LGGY…LKIE), 285–305 (IAYF…ITLL), and 308–328 (VPII…SVII). His-316 contributes to the heme binding site.

It belongs to the COX15/CtaA family. Type 2 subfamily. In terms of assembly, interacts with CtaB. The cofactor is heme b.

The protein resides in the cell membrane. The enzyme catalyses Fe(II)-heme o + 2 A + H2O = Fe(II)-heme a + 2 AH2. The protein operates within porphyrin-containing compound metabolism; heme A biosynthesis; heme A from heme O: step 1/1. In terms of biological role, catalyzes the conversion of heme O to heme A by two successive hydroxylations of the methyl group at C8. The first hydroxylation forms heme I, the second hydroxylation results in an unstable dihydroxymethyl group, which spontaneously dehydrates, resulting in the formyl group of heme A. The sequence is that of Heme A synthase from Rickettsia canadensis (strain McKiel).